The chain runs to 407 residues: uncharacterized protein (407 aa).

Disordered stretches follow at residues 1–64 (MSRK…EPFD), 110–276 (GFGP…YPQF), and 314–341 (QSRP…HNNP). Polar residues predominate over residues 7 to 32 (KQSNPKRNYKNDNYFQENSYTMTNGF). Residues 33–44 (TKDKDGKPVEFK) are compositionally biased toward basic and acidic residues. Positions 122 to 137 (DSDSEYSDECLTDECS) are enriched in acidic residues. Composition is skewed to polar residues over residues 138–147 (DNYNKQSTDS) and 184–201 (NFDN…NSQP). Low complexity predominate over residues 209 to 231 (SKSSSKSSKSNKSNKSSKSNKSS). Over residues 232–246 (KSSKSKSNKHSKHKN) the composition is skewed to basic residues. Positions 247–258 (KSDSSSDSDEKT) are enriched in basic and acidic residues. Basic residues-rich tracts occupy residues 259-270 (HKHKDRRHRRGR) and 316-341 (RPRK…HNNP).

This is an uncharacterized protein from Acanthamoeba polyphaga mimivirus (APMV).